Reading from the N-terminus, the 452-residue chain is Tubulin gamma chain (452 aa).

Residue alanine 142–glycine 148 participates in GTP binding.

Belongs to the tubulin family.

It localises to the cytoplasm. The protein localises to the cytoskeleton. It is found in the microtubule organizing center. Its subcellular location is the centrosome. Its function is as follows. Tubulin is the major constituent of microtubules. The gamma chain is found at microtubule organizing centers (MTOC) such as the spindle poles or the centrosome, suggesting that it is involved in the minus-end nucleation of microtubule assembly. This is Tubulin gamma chain (G-TUB) from Plasmodium falciparum (isolate NF54).